A 459-amino-acid polypeptide reads, in one-letter code: uncharacterized protein (459 aa).

Zn(2+) is bound at residue His79. Glu82 functions as the Proton acceptor in the catalytic mechanism. Zn(2+)-binding residues include His83 and Glu159.

The protein belongs to the peptidase M16 family. It depends on Zn(2+) as a cofactor.

This is an uncharacterized protein from Streptomyces coelicolor (strain ATCC BAA-471 / A3(2) / M145).